Consider the following 125-residue polypeptide: Large ribosomal subunit protein uL22c (125 aa).

Belongs to the universal ribosomal protein uL22 family. In terms of assembly, part of the 50S ribosomal subunit.

The protein resides in the plastid. The protein localises to the chloroplast. This protein binds specifically to 23S rRNA. Its function is as follows. The globular domain of the protein is located near the polypeptide exit tunnel on the outside of the subunit, while an extended beta-hairpin is found that lines the wall of the exit tunnel in the center of the 70S ribosome. The polypeptide is Large ribosomal subunit protein uL22c (rpl22) (Nymphaea alba (White water-lily)).